Consider the following 557-residue polypeptide: Dihydroxy-acid dehydratase (557 aa).

[2Fe-2S] cluster is bound at residue cysteine 47. Aspartate 79 is a binding site for Mg(2+). Residue cysteine 120 coordinates [2Fe-2S] cluster. Aspartate 121 and lysine 122 together coordinate Mg(2+). Lysine 122 carries the post-translational modification N6-carboxylysine. Cysteine 192 serves as a coordination point for [2Fe-2S] cluster. Glutamate 444 is a Mg(2+) binding site. The Proton acceptor role is filled by serine 470.

The protein belongs to the IlvD/Edd family. Homodimer. [2Fe-2S] cluster serves as cofactor. Mg(2+) is required as a cofactor.

It carries out the reaction (2R)-2,3-dihydroxy-3-methylbutanoate = 3-methyl-2-oxobutanoate + H2O. It catalyses the reaction (2R,3R)-2,3-dihydroxy-3-methylpentanoate = (S)-3-methyl-2-oxopentanoate + H2O. It functions in the pathway amino-acid biosynthesis; L-isoleucine biosynthesis; L-isoleucine from 2-oxobutanoate: step 3/4. The protein operates within amino-acid biosynthesis; L-valine biosynthesis; L-valine from pyruvate: step 3/4. In terms of biological role, functions in the biosynthesis of branched-chain amino acids. Catalyzes the dehydration of (2R,3R)-2,3-dihydroxy-3-methylpentanoate (2,3-dihydroxy-3-methylvalerate) into 2-oxo-3-methylpentanoate (2-oxo-3-methylvalerate) and of (2R)-2,3-dihydroxy-3-methylbutanoate (2,3-dihydroxyisovalerate) into 2-oxo-3-methylbutanoate (2-oxoisovalerate), the penultimate precursor to L-isoleucine and L-valine, respectively. The sequence is that of Dihydroxy-acid dehydratase from Synechococcus sp. (strain CC9605).